We begin with the raw amino-acid sequence, 174 residues long: Ribosome maturation factor RimM (174 aa).

A PRC barrel domain is found at Ala98 to Leu172.

This sequence belongs to the RimM family. In terms of assembly, binds ribosomal protein uS19.

The protein resides in the cytoplasm. An accessory protein needed during the final step in the assembly of 30S ribosomal subunit, possibly for assembly of the head region. Essential for efficient processing of 16S rRNA. May be needed both before and after RbfA during the maturation of 16S rRNA. It has affinity for free ribosomal 30S subunits but not for 70S ribosomes. This chain is Ribosome maturation factor RimM, found in Lactiplantibacillus plantarum (strain ATCC BAA-793 / NCIMB 8826 / WCFS1) (Lactobacillus plantarum).